A 258-amino-acid polypeptide reads, in one-letter code: Acetylglutamate kinase (258 aa).

Residues 41–42 (GG), Arg-63, and Asn-156 each bind substrate.

It belongs to the acetylglutamate kinase family. ArgB subfamily.

The protein resides in the cytoplasm. It carries out the reaction N-acetyl-L-glutamate + ATP = N-acetyl-L-glutamyl 5-phosphate + ADP. It functions in the pathway amino-acid biosynthesis; L-arginine biosynthesis; N(2)-acetyl-L-ornithine from L-glutamate: step 2/4. Catalyzes the ATP-dependent phosphorylation of N-acetyl-L-glutamate. This chain is Acetylglutamate kinase, found in Bacillus amyloliquefaciens (Bacillus velezensis).